Reading from the N-terminus, the 245-residue chain is UPF0319 protein VV0984 (245 aa).

The signal sequence occupies residues 1–20; sequence MRYIGKWMMLGALVSSSVFA.

The protein belongs to the UPF0319 family.

The protein is UPF0319 protein VV0984 of Vibrio vulnificus (strain YJ016).